Reading from the N-terminus, the 224-residue chain is Heme response regulator HssR (224 aa).

Positions 3–116 (KCLIVDDDYK…ELLFRIQAVL (114 aa)) constitute a Response regulatory domain. D52 is modified (4-aspartylphosphate). Positions 124 to 222 (QDIIKLGNVT…VRGQGYRVIT (99 aa)) form a DNA-binding region, ompR/PhoB-type.

Post-translationally, phosphorylated by HssS.

It is found in the cytoplasm. Functionally, member of the two-component regulatory system HssS/HssR involved in intracellular heme homeostasis and tempering of staphylococcal virulence. Phosphorylated HssR binds to a direct repeat sequence within hrtAB promoter and activates the expression of hrtAB, an efflux pump, in response to extracellular heme, hemin, hemoglobin or blood. The polypeptide is Heme response regulator HssR (hssR) (Staphylococcus haemolyticus (strain JCSC1435)).